Reading from the N-terminus, the 257-residue chain is Type III pantothenate kinase (257 aa).

Residue 6 to 13 (DAGNTNIV) participates in ATP binding. Substrate contacts are provided by residues Tyr100 and 107–110 (GADR). The Proton acceptor role is filled by Asp109. Asp129 is a binding site for K(+). Thr132 contacts ATP. Residue Thr184 coordinates substrate.

Belongs to the type III pantothenate kinase family. Homodimer. Requires NH4(+) as cofactor. It depends on K(+) as a cofactor.

It localises to the cytoplasm. The catalysed reaction is (R)-pantothenate + ATP = (R)-4'-phosphopantothenate + ADP + H(+). It functions in the pathway cofactor biosynthesis; coenzyme A biosynthesis; CoA from (R)-pantothenate: step 1/5. In terms of biological role, catalyzes the phosphorylation of pantothenate (Pan), the first step in CoA biosynthesis. This Clostridium botulinum (strain Alaska E43 / Type E3) protein is Type III pantothenate kinase.